Here is a 231-residue protein sequence, read N- to C-terminus: NKG2-C type II integral membrane protein (231 aa).

A compositionally biased stretch (polar residues) spans 1–12 (MNKQRGTFSEVS). The segment at 1-31 (MNKQRGTFSEVSLAQDPKRQQRKPKDNKSSI) is disordered. At 1–70 (MNKQRGTFSE…CQGLLPPPEK (70 aa)) the chain is on the cytoplasmic side. Residues 16 to 28 (DPKRQQRKPKDNK) are compositionally biased toward basic and acidic residues. The chain crosses the membrane as a helical; Signal-anchor for type II membrane protein span at residues 71-93 (LTAEVLGIICIVLMATVLKTVVL). Topologically, residues 94–231 (IPFLEQNNSF…SKRYYCKHKL (138 aa)) are extracellular. Asn-100 is a glycosylation site (N-linked (GlcNAc...) asparagine). Residues 116 to 229 (HCPEEWITYS…GSSKRYYCKH (114 aa)) form the C-type lectin domain. 3 cysteine pairs are disulfide-bonded: Cys-117-Cys-128, Cys-145-Cys-227, and Cys-206-Cys-219. An N-linked (GlcNAc...) asparagine glycan is attached at Asn-149.

In terms of assembly, heterodimer with KLRD1; disulfide-linked. KLRD1-KLRC2 receptor complex interacts with TYROBP/DAP12 homodimer; this interaction is necessary for the expression on the cell surface. As to expression, natural killer cells.

Its subcellular location is the cell membrane. Its function is as follows. Immune activating receptor involved in self-nonself discrimination. In complex with KLRD1 on cytotoxic lymphocyte subsets, recognizes non-classical major histocompatibility MHC-E loaded with signal sequence-derived peptides from non-classical MHC-G molecules, likely playing a role in the generation and effector functions of adaptive natural killer (NK) cells and in maternal-fetal tolerance during pregnancy. Regulates the effector functions of terminally differentiated cytotoxic lymphocyte subsets, and in particular may play a role in adaptive NK cell response to viral infection. Upon MHC-E-peptide binding, transmits intracellular signals via the adapter protein TYROBP/DAP12, triggering the phosphorylation of proximal signaling molecules and cell activation. The sequence is that of NKG2-C type II integral membrane protein (KLRC2) from Macaca mulatta (Rhesus macaque).